A 578-amino-acid polypeptide reads, in one-letter code: GRAM domain-containing protein 4 (578 aa).

2 disordered regions span residues 23 to 58 (ESPN…AGPG) and 136 to 159 (TEEQ…ERRS). A phosphoserine mark is found at Ser24 and Ser28. Residues 44-53 (SPRDSEELRD) show a composition bias toward basic and acidic residues. The stretch at 83-143 (HLEIALLEKH…ARTEEQMAQQ (61 aa)) forms a coiled coil. 3 helical membrane-spanning segments follow: residues 240-260 (VYMN…LAIL), 334-354 (ITQK…FFPY), and 356-376 (LVGL…DFIF). The segment at 415-435 (QTTSSRSYVPSAPAGLGKEED) is disordered. The GRAM domain maps to 445–523 (GNFHEIFNLT…VDITDIQKYK (79 aa)).

Interacts with RTN4 (isoform B). As to expression, expressed in lung and in primary lung squamous cell carcinoma (LSCC).

The protein localises to the mitochondrion membrane. It localises to the endoplasmic reticulum membrane. Its function is as follows. Plays a role as a mediator of E2F1-induced apoptosis in the absence of p53/TP53. Plays a role as a mediator of E2F1-induced apoptosis in the absence of p53/TP53. Inhibits TLR9 response to nucelic acids and regulates TLR9-mediated innate immune response. This chain is GRAM domain-containing protein 4, found in Homo sapiens (Human).